The sequence spans 513 residues: Cytochrome P450 monooxygenase orf3 (513 aa).

A helical transmembrane segment spans residues L11–Y31. Residues N211 and N351 are each glycosylated (N-linked (GlcNAc...) asparagine). C455 serves as a coordination point for heme.

It belongs to the cytochrome P450 family. It depends on heme as a cofactor.

Its subcellular location is the membrane. The protein operates within mycotoxin biosynthesis. Functionally, cytochrome P450 monooxygenase; part of the gene cluster that mediates the biosynthesis of brefeldin A (BFA), a protein transport inhibitor that shows antiviral, antifungal, and antitumor properties. The proposed biosynthesis of BFA involves formation of an acyclic polyketide chain that is differentially tailored throughout the backbone. The highly reducing polyketide synthase Bref-PKS is proposed to synthesize the precisely reduced octaketide precursor, which could then be directly offloaded by the thiohydrolase enzyme Bref-TH followed by a cytochrome P450 monooxygenase-mediated formation of the cyclopentane ring and macrocyclization to afford 7-deoxy BFA. Alternatively, the first ring annulation can also occur on the ACP-tethered intermediate before the thiohydrolase release and lactonization. The C7-hydroxylation by another cytochrome P450 monooxygenase is believed to be the final step in the process to obtain the final structure of BFA. In addition to the HRPKS Bref-PKS and the thiohydrolase Bref-TH, the brefeldin A biosynthesis cluster contains 4 cytochrome p450 monooxygenases (called orf3 to orf6), as well a the probable cluster-specific transcription regulator orf8. In Eupenicillium brefeldianum (Penicillium brefeldianum), this protein is Cytochrome P450 monooxygenase orf3.